The following is a 426-amino-acid chain: Glutamate-1-semialdehyde 2,1-aminomutase (426 aa).

Residue lysine 265 is modified to N6-(pyridoxal phosphate)lysine.

The protein belongs to the class-III pyridoxal-phosphate-dependent aminotransferase family. HemL subfamily. In terms of assembly, homodimer. It depends on pyridoxal 5'-phosphate as a cofactor.

The protein localises to the cytoplasm. The enzyme catalyses (S)-4-amino-5-oxopentanoate = 5-aminolevulinate. Its pathway is porphyrin-containing compound metabolism; protoporphyrin-IX biosynthesis; 5-aminolevulinate from L-glutamyl-tRNA(Glu): step 2/2. The sequence is that of Glutamate-1-semialdehyde 2,1-aminomutase from Pectobacterium carotovorum subsp. carotovorum (strain PC1).